The sequence spans 221 residues: Probable septum site-determining protein MinC (221 aa).

It belongs to the MinC family. Interacts with MinD and FtsZ.

Functionally, cell division inhibitor that blocks the formation of polar Z ring septums. Rapidly oscillates between the poles of the cell to destabilize FtsZ filaments that have formed before they mature into polar Z rings. Prevents FtsZ polymerization. In Shewanella sp. (strain MR-7), this protein is Probable septum site-determining protein MinC.